Here is a 131-residue protein sequence, read N- to C-terminus: Olfactory receptor-like protein COR9 (131 aa).

At 1–16 (VAICSPLLYSTVMTKR) the chain is on the cytoplasmic side. A helical transmembrane segment spans residues 17–41 (VCMQLVVGSYMGGLLNSLTHTCGLL). The Extracellular portion of the chain corresponds to 42 to 82 (GLPFCGPNVINHYFCDIPPLLQLACSDTHRNETLLLAFSAV). N-linked (GlcNAc...) asparagine glycosylation occurs at Asn72. Residues 83–103 (IALFTLFVITASYMLILSVIL) form a helical membrane-spanning segment. Residues 104–116 (KIQSDDGRKKTFH) are Cytoplasmic-facing. Residues 117 to 131 (TCASHLTAITIFFGS) traverse the membrane as a helical segment.

Belongs to the G-protein coupled receptor 1 family.

The protein localises to the cell membrane. Its function is as follows. Odorant receptor. This Gallus gallus (Chicken) protein is Olfactory receptor-like protein COR9 (COR9).